We begin with the raw amino-acid sequence, 167 residues long: UTP pyrophosphatase (167 aa).

It catalyses the reaction UTP + H2O = UMP + diphosphate + H(+). In terms of biological role, specifically catalyzes the hydrolysis of UTP to UMP and diphosphate in vitro, albeit at apparently slow rate. Shows no activity towards ATP, GTP, CTP, dTTP and ITP as substrates. The polypeptide is UTP pyrophosphatase (Escherichia coli (strain K12)).